Reading from the N-terminus, the 434-residue chain is UDP-N-acetylglucosamine 1-carboxyvinyltransferase 1 (434 aa).

22–23 provides a ligand contact to phosphoenolpyruvate; it reads KN. Arg93 lines the UDP-N-acetyl-alpha-D-glucosamine pocket. The Proton donor role is filled by Cys117. Cys117 carries the post-translational modification 2-(S-cysteinyl)pyruvic acid O-phosphothioketal. Residues 122 to 126, Asp306, and Val328 contribute to the UDP-N-acetyl-alpha-D-glucosamine site; that span reads RPIDQ.

This sequence belongs to the EPSP synthase family. MurA subfamily.

Its subcellular location is the cytoplasm. It carries out the reaction phosphoenolpyruvate + UDP-N-acetyl-alpha-D-glucosamine = UDP-N-acetyl-3-O-(1-carboxyvinyl)-alpha-D-glucosamine + phosphate. Its pathway is cell wall biogenesis; peptidoglycan biosynthesis. Cell wall formation. Adds enolpyruvyl to UDP-N-acetylglucosamine. The sequence is that of UDP-N-acetylglucosamine 1-carboxyvinyltransferase 1 from Bacillus anthracis.